Consider the following 134-residue polypeptide: Cytochrome b5 (134 aa).

One can recognise a Cytochrome b5 heme-binding domain in the interval 6–82; it reads VKYFTRAEVA…MKQYKVGELV (77 aa). Residues His41 and His65 each coordinate heme. The helical transmembrane segment at 111–131 threads the bilayer; that stretch reads WLMPFVLGLVATLIYKFFFGT.

Belongs to the cytochrome b5 family.

It is found in the endoplasmic reticulum membrane. It localises to the microsome membrane. Cytochrome b5 is a membrane bound hemoprotein which function as an electron carrier for several membrane bound oxygenases. This chain is Cytochrome b5 (Cyt-b5), found in Musca domestica (House fly).